Here is a 1233-residue protein sequence, read N- to C-terminus: MGFLKLIEIENFKSYKGRQIIGPFQRFTAIIGPNGSGKSNLMDAISFVLGEKTSNLRVKTLRDLIHGAPVGKPAANRAFVSMVYSEEGAEDRTFARVIVGGSSEYKINNKVVQLHEYSEELEKLGILIKARNFLVFQGAVESIAMKNPKERTALFEEISRSGELAQEYDKRKKEMVKAEEDTQFNYHRKKNIAAERKEAKQEKEEADRYQALKDEVVRAQVQLQLFKLYHNEVEIEKLNKELASKNKEIEKDKKRMDKVEDELKEKKKELGKMMREQQQIEKEIKEKDSELNQKRPQYIKAKENTSHKIKKLEAAKKSLQNRQKHYKKRKGDMDELEKEMLSVEKARQEFEERMEEESQSQGRDLTLEENQVKKYHRLKEEASKRAATLAQELEKFNRDQKADQDRLDLEERKKVETEAKIKQKLREIEENQKRIEKLEEYITTSKQSLEEQKKLEGELTEEVEMAKRRIDEINKELNQVMEQLGDARIDRQESSRQQRKAEIMESIKRLYPGSVYGRLIDLCQPTQKKYQIAVTKVLGKNMDAIIVDSEKTGRDCIQYIKEQRGEPETFLPLDYLEVKPTDEKLRELKGAKLVIDVIRYEPPHIKKALQYACGNALVCDNVEDARRIAFGGHQRHKTVALDGTLFQKSGVISGGASDLKAKARRWDEKAVDKLKEKKERLTEELKEQMKAKRKEAELRQVQSQAHGLQMRLKYSQSDLEQTKTRHLALNLQEKSKLESELANFGPRINDIKRIIQSREREMKDLKEKMNQVEDEVFEEFCREIGVRNIREFEEEKVKRQNEIAKKRLEFENQKTRLGIQLDFEKNQLKEDQDKVHMWEQTVKKDENEIEKLKKEEQRHMKIIDETMAQLQDLKNQHLAKKSEVNDKNHEMEEIRKKLGGANKEMTHLQKEVTAIETKLEQKRSDRHNLLQACKMQDIKLPLSKGTMDDISQEEGGSQGEESVSGSQRTSSIYAREALIEIDYGDLCEDLKDAQAEEEIKQEMNTLQQKLNEQQSVLQRIAAPNMKAMEKLESVRDKFQETSDEFEAARKRAKKAKQAFEQIKKERFDRFNACFESVATNIDEIYKALSRNSSAQAFLGPENPEEPYLDGINYNCVAPGKRFRPMDNLSGGEKTVAALALLFAIHSYKPAPFFVLDEIDAALDNTNIGKVANYIKEQSTCNFQAIVISLKEEFYTKAESLIGVYPEQGDCVISKVLTFDLTKYPDANPNPNEQ.

32 to 39 (GPNGSGKS) serves as a coordination point for ATP. Coiled-coil stretches lie at residues 104–124 (EYKI…LEKL) and 163–503 (ELAQ…KAEI). Residues 284 to 293 (IKEKDSELNQ) are compositionally biased toward basic and acidic residues. Disordered regions lie at residues 284–307 (IKEK…NTSH) and 350–369 (FEER…TLEE). A phosphoserine mark is found at Ser-358 and Ser-360. The SMC hinge domain maps to 515–629 (VYGRLIDLCQ…DNVEDARRIA (115 aa)). Residues Lys-648 and Lys-713 each carry the N6-acetyllysine modification. The stretch at 660 to 935 (KAKARRWDEK…RHNLLQACKM (276 aa)) forms a coiled coil. The tract at residues 946–969 (TMDDISQEEGGSQGEESVSGSQRT) is disordered. Low complexity predominate over residues 953–967 (EEGGSQGEESVSGSQ). Residues Ser-957, Ser-962, Ser-966, and Ser-970 each carry the phosphoserine modification. Positions 991-1068 (KDAQAEEEIK…FEQIKKERFD (78 aa)) form a coiled coil. Lys-1037 carries the N6-acetyllysine modification.

It belongs to the SMC family. SMC1 subfamily. Forms a heterodimer with SMC3 in cohesin complexes. Cohesin complexes are composed of the SMC1 (SMC1A or meiosis-specific SMC1B) and SMC3 heterodimer attached via their SMC hinge domain, RAD21 which link them, and one STAG protein (STAG1, STAG2 or meiosis-specific STAG3), which interacts with RAD21. In germ cell cohesin complexes, SMC1A is mutually exclusive with SMC1B. Found in a complex with CDCA5, SMC3 and RAD21, PDS5A/SCC-112 and PDS5B/APRIN. Interacts with STAG3, NDC80, BRAC1, BRAT1 and RPGR. Found in a complex containing POLE and SMC3. The cohesin complex interacts with the cohesin loading complex subunits NIPBL/Scc2 (via HEAT repeats) and MAU2/Scc4. NIPBL directly contacts all members of the complex, RAD21, SMC1A/B, SMC3 and STAG1. Interacts with SYCP2. In terms of processing, phosphorylated upon ionizing radiation or DNA methylation. Phosphorylation of Ser-957 and Ser-966 activates it and is required for S-phase checkpoint activation. Post-translationally, ubiquitinated by the DCX(DCAF15) complex, leading to its degradation.

It localises to the nucleus. The protein localises to the chromosome. Its function is as follows. Involved in chromosome cohesion during cell cycle and in DNA repair. Central component of cohesin complex. The cohesin complex is required for the cohesion of sister chromatids after DNA replication. The cohesin complex apparently forms a large proteinaceous ring within which sister chromatids can be trapped. At anaphase, the complex is cleaved and dissociates from chromatin, allowing sister chromatids to segregate. The cohesin complex may also play a role in spindle pole assembly during mitosis. Involved in DNA repair via its interaction with BRCA1 and its related phosphorylation by ATM, or via its phosphorylation by ATR. Works as a downstream effector both in the ATM/NBS1 branch and in the ATR/MSH2 branch of S-phase checkpoint. This chain is Structural maintenance of chromosomes protein 1A (Smc1a), found in Rattus norvegicus (Rat).